Reading from the N-terminus, the 257-residue chain is MVLIRVLANLLILQLSYAQRSSELVIGGDECNINEHRFLALVYTDRFQCGGTLINPEWVLTAAHCDRRYMHIYLGVHNESVQYDDEQRRFPKKKYFCLSSKNYTRWDKDIMLIRLNRPVRNSAHIAHLSLPSKPPSVGSVCRVMGWGTITSPNETLPDVPRCANINLFNYTVCRGVFPWLPARSRILCAGVLQGGIDTCKRDSGGPLICNGQFQGIVSWGPKPCAQPREPALYTKVFDHLDWIQSIIAGNTTVTCPP.

A signal peptide spans 1-18; it reads MVLIRVLANLLILQLSYA. The propeptide occupies 19-24; the sequence is QRSSEL. In terms of domain architecture, Peptidase S1 spans 25–248; the sequence is VIGGDECNIN…HLDWIQSIIA (224 aa). Disulfide bonds link Cys-31/Cys-162, Cys-49/Cys-65, Cys-141/Cys-209, Cys-173/Cys-188, and Cys-199/Cys-224. His-64 acts as the Charge relay system in catalysis. N-linked (GlcNAc...) asparagine glycosylation is found at Asn-78 and Asn-102. Asp-109 (charge relay system) is an active-site residue. Residues Asn-153 and Asn-169 are each glycosylated (N-linked (GlcNAc...) asparagine). Ser-203 serves as the catalytic Charge relay system. Residue Asn-250 is glycosylated (N-linked (GlcNAc...) asparagine).

It belongs to the peptidase S1 family. Snake venom subfamily. As to quaternary structure, monomer. As to expression, expressed by the venom gland.

It localises to the secreted. In terms of biological role, snake venom serine protease that may act in the hemostasis system of the prey. In Trimeresurus stejnegeri (Chinese green tree viper), this protein is Snake venom serine protease CL5.